The following is a 387-amino-acid chain: Succinate--CoA ligase [ADP-forming] subunit beta (387 aa).

The region spanning lysine 9–lysine 236 is the ATP-grasp domain. ATP contacts are provided by residues lysine 45, glycine 52–glycine 54, serine 94, and glutamate 99. 2 residues coordinate Mg(2+): asparagine 191 and aspartate 205. Substrate contacts are provided by residues asparagine 256 and glycine 318–threonine 320.

The protein belongs to the succinate/malate CoA ligase beta subunit family. As to quaternary structure, heterotetramer of two alpha and two beta subunits. It depends on Mg(2+) as a cofactor.

The catalysed reaction is succinate + ATP + CoA = succinyl-CoA + ADP + phosphate. It catalyses the reaction GTP + succinate + CoA = succinyl-CoA + GDP + phosphate. It participates in carbohydrate metabolism; tricarboxylic acid cycle; succinate from succinyl-CoA (ligase route): step 1/1. Succinyl-CoA synthetase functions in the citric acid cycle (TCA), coupling the hydrolysis of succinyl-CoA to the synthesis of either ATP or GTP and thus represents the only step of substrate-level phosphorylation in the TCA. The beta subunit provides nucleotide specificity of the enzyme and binds the substrate succinate, while the binding sites for coenzyme A and phosphate are found in the alpha subunit. The polypeptide is Succinate--CoA ligase [ADP-forming] subunit beta (Mycobacterium ulcerans (strain Agy99)).